A 192-amino-acid chain; its full sequence is MKRIGLFGGTFDPPHLGHLLIAQEALTAVKLDEVWFVPVSTPPHKERAGLTSGKDRYDMVKAALVQEERFRVCDIELIRKGKSYTIDTVRELKQTYPDDEFFFLIGGDMVNMLPEWRGIDELKQLVTFVAFNRPGASAKSQPDVHFVPFVEVNISSSLIRERLAKGKPIRYFVTPAVEQLIEERNLYGDNNE.

This sequence belongs to the NadD family.

The catalysed reaction is nicotinate beta-D-ribonucleotide + ATP + H(+) = deamido-NAD(+) + diphosphate. The protein operates within cofactor biosynthesis; NAD(+) biosynthesis; deamido-NAD(+) from nicotinate D-ribonucleotide: step 1/1. In terms of biological role, catalyzes the reversible adenylation of nicotinate mononucleotide (NaMN) to nicotinic acid adenine dinucleotide (NaAD). This is Probable nicotinate-nucleotide adenylyltransferase from Shouchella clausii (strain KSM-K16) (Alkalihalobacillus clausii).